We begin with the raw amino-acid sequence, 124 residues long: MRQAGRAALLAALLLLVQLCPGSSQRSPEAAGVQDPSLRWSPGARNQGGGARALLLLLAERFPRRAGPGRLGLGTAGERPRRDNPSLSIDLTFHLLRTLLELARTQSQRERAEQNRIIFDSVGK.

Positions 1–25 are cleaved as a signal peptide; sequence MRQAGRAALLAALLLLVQLCPGSSQ. The tract at residues 23 to 46 is disordered; that stretch reads SSQRSPEAAGVQDPSLRWSPGARN. A propeptide spanning residues 26–82 is cleaved from the precursor; it reads RSPEAAGVQDPSLRWSPGARNQGGGARALLLLLAERFPRRAGPGRLGLGTAGERPRR. Val-122 carries the post-translational modification Valine amide.

It belongs to the sauvagine/corticotropin-releasing factor/urotensin I family. Interacts with CRHR1 and CRHR2 (via their N-terminal extracellular domain). As to expression, keratinocytes in epidermis and the outer and inner root sheaths of hair follicles, epithelium of sebaceous and sweat glands, erector pili muscle, cutaneous blood vessel walls, cutaneous nerves and dermal mononuclear cells. Detected in plasma cells in the lamia propria in colon mucosa (at protein level). Expressed in pituitary and adrenal glands. Detected in plasma cells in the lamia propria in colon mucosa.

It is found in the secreted. Its function is as follows. Acts in vitro to stimulate the secretion of adrenocorticotropic hormone (ACTH). Binds with high affinity to CRF receptor types 1, 2-alpha, and 2-beta. Plays a role in the establishment of normal hearing thresholds. Reduces food intake and regulates ghrelin levels in gastric body and plasma. The polypeptide is Urocortin (UCN) (Homo sapiens (Human)).